The chain runs to 311 residues: GTP cyclohydrolase FolE2 (311 aa).

It belongs to the GTP cyclohydrolase IV family.

The enzyme catalyses GTP + H2O = 7,8-dihydroneopterin 3'-triphosphate + formate + H(+). Its pathway is cofactor biosynthesis; 7,8-dihydroneopterin triphosphate biosynthesis; 7,8-dihydroneopterin triphosphate from GTP: step 1/1. Functionally, converts GTP to 7,8-dihydroneopterin triphosphate. The chain is GTP cyclohydrolase FolE2 from Xanthomonas campestris pv. campestris (strain 8004).